Here is a 493-residue protein sequence, read N- to C-terminus: UDP-N-acetylmuramoyl-L-alanyl-D-glutamate--2,6-diaminopimelate ligase (493 aa).

Positions 30 and 32 each coordinate UDP-N-acetyl-alpha-D-muramoyl-L-alanyl-D-glutamate. ATP is bound at residue 117–123 (GTNGKTT). UDP-N-acetyl-alpha-D-muramoyl-L-alanyl-D-glutamate contacts are provided by residues N158, 159–160 (TT), S186, Q192, and R194. K226 is modified (N6-carboxylysine). Meso-2,6-diaminopimelate-binding positions include R388, 412-415 (DNPR), G463, and E467. Positions 412 to 415 (DNPR) match the Meso-diaminopimelate recognition motif motif.

The protein belongs to the MurCDEF family. MurE subfamily. Mg(2+) is required as a cofactor. In terms of processing, carboxylation is probably crucial for Mg(2+) binding and, consequently, for the gamma-phosphate positioning of ATP.

The protein resides in the cytoplasm. The enzyme catalyses UDP-N-acetyl-alpha-D-muramoyl-L-alanyl-D-glutamate + meso-2,6-diaminopimelate + ATP = UDP-N-acetyl-alpha-D-muramoyl-L-alanyl-gamma-D-glutamyl-meso-2,6-diaminopimelate + ADP + phosphate + H(+). The protein operates within cell wall biogenesis; peptidoglycan biosynthesis. In terms of biological role, catalyzes the addition of meso-diaminopimelic acid to the nucleotide precursor UDP-N-acetylmuramoyl-L-alanyl-D-glutamate (UMAG) in the biosynthesis of bacterial cell-wall peptidoglycan. This chain is UDP-N-acetylmuramoyl-L-alanyl-D-glutamate--2,6-diaminopimelate ligase, found in Vibrio parahaemolyticus serotype O3:K6 (strain RIMD 2210633).